The chain runs to 138 residues: ATP synthase epsilon chain (138 aa).

Belongs to the ATPase epsilon chain family. In terms of assembly, F-type ATPases have 2 components, CF(1) - the catalytic core - and CF(0) - the membrane proton channel. CF(1) has five subunits: alpha(3), beta(3), gamma(1), delta(1), epsilon(1). CF(0) has three main subunits: a, b and c.

It localises to the cell membrane. In terms of biological role, produces ATP from ADP in the presence of a proton gradient across the membrane. This is ATP synthase epsilon chain from Streptococcus uberis (strain ATCC BAA-854 / 0140J).